The primary structure comprises 398 residues: uncharacterized protein (398 aa).

This is an uncharacterized protein from Neisseria meningitidis serogroup B (strain ATCC BAA-335 / MC58).